Here is a 218-residue protein sequence, read N- to C-terminus: Large ribosomal subunit protein uL3 (218 aa).

Residues 126–169 (HGFSRGPMTHGSKNHRQPGSIGAGTTPGRIYPGKRMSGRYGGKK) form a disordered region.

The protein belongs to the universal ribosomal protein uL3 family. As to quaternary structure, part of the 50S ribosomal subunit. Forms a cluster with proteins L14 and L19.

In terms of biological role, one of the primary rRNA binding proteins, it binds directly near the 3'-end of the 23S rRNA, where it nucleates assembly of the 50S subunit. The chain is Large ribosomal subunit protein uL3 from Synechococcus sp. (strain CC9902).